Reading from the N-terminus, the 671-residue chain is DNA ligase (671 aa).

Residues 31–35 (DAEYD), 80–81 (SL), and Glu-110 each bind NAD(+). Lys-112 acts as the N6-AMP-lysine intermediate in catalysis. Arg-133, Glu-167, Lys-283, and Lys-307 together coordinate NAD(+). The Zn(2+) site is built by Cys-401, Cys-404, Cys-419, and Cys-424. The BRCT domain maps to 587–671 (EEELVFAGKT…YLPDEGGLNE (85 aa)).

This sequence belongs to the NAD-dependent DNA ligase family. LigA subfamily. Mg(2+) serves as cofactor. It depends on Mn(2+) as a cofactor.

It carries out the reaction NAD(+) + (deoxyribonucleotide)n-3'-hydroxyl + 5'-phospho-(deoxyribonucleotide)m = (deoxyribonucleotide)n+m + AMP + beta-nicotinamide D-nucleotide.. Functionally, DNA ligase that catalyzes the formation of phosphodiester linkages between 5'-phosphoryl and 3'-hydroxyl groups in double-stranded DNA using NAD as a coenzyme and as the energy source for the reaction. It is essential for DNA replication and repair of damaged DNA. This is DNA ligase from Listeria monocytogenes serotype 4b (strain CLIP80459).